We begin with the raw amino-acid sequence, 347 residues long: Membrane progestin receptor gamma-B (347 aa).

Over 1–52 the chain is Cytoplasmic; the sequence is MLSLIKLQRVFNVHQVPKAFHEDGIISGYRHPRSSATECVWSLFQLTNETLN. The helical transmembrane segment at 53–73 threads the bilayer; the sequence is VWTHFLPTWYFLWKLMTVLLM. At 74-81 the chain is on the extracellular side; sequence EDVWNEAY. A helical membrane pass occupies residues 82 to 102; it reads TWPLLVFLFSCCVYPLASSCA. Over 103 to 114 the chain is Cytoplasmic; sequence HTFSSMSTRARH. Residues 115-135 traverse the membrane as a helical segment; that stretch reads ICYFFDYGALSFYSLGSAISY. Topologically, residues 136–138 are extracellular; that stretch reads SAY. Residues 139-159 form a helical membrane-spanning segment; it reads VFPDAWLSSSFHAYYISVAVF. Residues 160–201 are Cytoplasmic-facing; that stretch reads NTVLSTSLACYSRLGLPLLHYSHDIVERFSERQCPRMSKVLR. The helical transmembrane segment at 202 to 222 threads the bilayer; it reads ILAFAYPYLFDNIPLFYRLFV. Topologically, residues 223–235 are extracellular; sequence CVGEGCTDNEANS. The chain crosses the membrane as a helical span at residues 236–256; the sequence is VHVQHTLLAFLTSFLFATHLP. At 257–314 the chain is on the cytoplasmic side; it reads ERLAPGRFDYIGHSHQLFHVCAIIGTHFQMKAIEMDMGLRRSQLLASAPAISFNNTIG. Residues 315-335 form a helical membrane-spanning segment; the sequence is AALLCVSVSLGIICVYSLPLL. Over 336–347 the chain is Extracellular; it reads YSSNPKNTANKE.

The protein belongs to the ADIPOR family.

It is found in the membrane. In terms of biological role, steroid membrane receptor. Binds progesterone. May be involved in oocyte maturation. The chain is Membrane progestin receptor gamma-B from Danio rerio (Zebrafish).